A 479-amino-acid chain; its full sequence is Glutamate--tRNA ligase (479 aa).

Residues Pro21 to Gly31 carry the 'HIGH' region motif. Residues Lys248–Arg252 carry the 'KMSKS' region motif. An ATP-binding site is contributed by Lys251.

Belongs to the class-I aminoacyl-tRNA synthetase family. Glutamate--tRNA ligase type 1 subfamily. Monomer.

The protein localises to the cytoplasm. The catalysed reaction is tRNA(Glu) + L-glutamate + ATP = L-glutamyl-tRNA(Glu) + AMP + diphosphate. Catalyzes the attachment of glutamate to tRNA(Glu) in a two-step reaction: glutamate is first activated by ATP to form Glu-AMP and then transferred to the acceptor end of tRNA(Glu). The sequence is that of Glutamate--tRNA ligase from Haemophilus ducreyi (strain 35000HP / ATCC 700724).